Here is a 150-residue protein sequence, read N- to C-terminus: Keratin-associated protein 15-1 (150 aa).

Belongs to the PMG family. As to quaternary structure, interacts with hair keratins. Expressed at high levels in skin and at lower levels in the developing mammary gland.

Its function is as follows. In the hair cortex, hair keratin intermediate filaments are embedded in an interfilamentous matrix, consisting of hair keratin-associated proteins (KRTAP), which are essential for the formation of a rigid and resistant hair shaft through their extensive disulfide bond cross-linking with abundant cysteine residues of hair keratins. The matrix proteins include the high-sulfur and high-glycine-tyrosine keratins. The protein is Keratin-associated protein 15-1 of Mus musculus (Mouse).